The following is a 617-amino-acid chain: Proline--tRNA ligase (617 aa).

The protein belongs to the class-II aminoacyl-tRNA synthetase family. ProS type 1 subfamily. As to quaternary structure, homodimer.

It is found in the cytoplasm. It catalyses the reaction tRNA(Pro) + L-proline + ATP = L-prolyl-tRNA(Pro) + AMP + diphosphate. Catalyzes the attachment of proline to tRNA(Pro) in a two-step reaction: proline is first activated by ATP to form Pro-AMP and then transferred to the acceptor end of tRNA(Pro). As ProRS can inadvertently accommodate and process non-cognate amino acids such as alanine and cysteine, to avoid such errors it has two additional distinct editing activities against alanine. One activity is designated as 'pretransfer' editing and involves the tRNA(Pro)-independent hydrolysis of activated Ala-AMP. The other activity is designated 'posttransfer' editing and involves deacylation of mischarged Ala-tRNA(Pro). The misacylated Cys-tRNA(Pro) is not edited by ProRS. This chain is Proline--tRNA ligase, found in Streptococcus pneumoniae (strain P1031).